Reading from the N-terminus, the 765-residue chain is Kinesin-like protein KIN-14S (765 aa).

The Kinesin motor domain occupies asparagine 132–isoleucine 456. Glycine 215 to threonine 222 is a binding site for ATP. Residues glutamate 469–serine 534 adopt a coiled-coil conformation. Disordered regions lie at residues methionine 581–aspartate 613 and leucine 654–proline 678. Residues asparagine 602–serine 611 are compositionally biased toward low complexity.

The protein belongs to the TRAFAC class myosin-kinesin ATPase superfamily. Kinesin family. KIN-14 subfamily.

The sequence is that of Kinesin-like protein KIN-14S from Arabidopsis thaliana (Mouse-ear cress).